We begin with the raw amino-acid sequence, 72 residues long: Putative membrane protein insertion efficiency factor (72 aa).

The protein belongs to the UPF0161 family.

The protein resides in the cell inner membrane. Its function is as follows. Could be involved in insertion of integral membrane proteins into the membrane. The protein is Putative membrane protein insertion efficiency factor of Amoebophilus asiaticus (strain 5a2).